The chain runs to 242 residues: Interleukin-34 (242 aa).

The signal sequence occupies residues 1–20 (MPRGFTWLRYLGIFLGVALG). An N-linked (GlcNAc...) asparagine glycan is attached at N76. Residues 210 to 242 (TQLYPPPPWSPSSPPHSTGSVRPVRAQGEGLLP) are disordered. Over residues 213 to 223 (YPPPPWSPSSP) the composition is skewed to pro residues.

The protein belongs to the IL-34 family. Homodimer. Interacts with CSF1R. As to expression, detected in the sinusoidal epithelium in the red pulp of spleen (at protein level). Predominantly expressed in spleen. Also detected in a range of other tissues including heart, brain, lung, liver, kidney, thymus, testis, ovary, small intestine, prostate and colon.

Its subcellular location is the secreted. Its function is as follows. Cytokine that promotes the proliferation, survival and differentiation of monocytes and macrophages. Promotes the release of pro-inflammatory chemokines, and thereby plays an important role in innate immunity and in inflammatory processes. Plays an important role in the regulation of osteoclast proliferation and differentiation, and in the regulation of bone resorption. Signaling via CSF1R and its downstream effectors stimulates phosphorylation of MAPK1/ERK2 AND MAPK3/ERK1. This chain is Interleukin-34 (IL34), found in Homo sapiens (Human).